We begin with the raw amino-acid sequence, 606 residues long: Transcription factor glial cells missing 2 (606 aa).

A compositionally biased stretch (polar residues) spans 20-37 (DHSQLTQFVQPQSQSTHS). Disordered regions lie at residues 20–65 (DHSQ…KGKR), 475–501 (EMQQ…HHYY), and 561–606 (TAPT…SVTH). Residues 44–61 (PGQQQAGGSMTMPSSSTG) show a composition bias toward low complexity. The segment at residues 65–224 (REWDINDAIV…KNSSVSKRAF (160 aa)) is a DNA-binding region (GCM). Polar residues predominate over residues 490–501 (FGGNQTAGHHYY). Residues 569-580 (PGHPPPPPPPPT) show a composition bias toward pro residues. Residues 583-593 (YHHHHHHHLHH) show a composition bias toward basic residues. The segment covering 594–606 (PAAATGLAPSVTH) has biased composition (low complexity).

Expressed in glial lineages within embryonic procephalic mesoderm. Expression is highest in hemocyte primordia and longitudinal and nerve root ganglia.

Its subcellular location is the nucleus. Transcription factor with a minor role promoting glial cell differentiation and a more significant role in hematocyte differentiation. Gcm2, together with gcm, is required for the proliferation of plasmatocyte precursors, the expression of Croquemort protein, and the ability of plasmatocytes to convert into macrophages. The sequence is that of Transcription factor glial cells missing 2 (gcm2) from Drosophila melanogaster (Fruit fly).